Here is a 39-residue protein sequence, read N- to C-terminus: Small basic protein 1 (39 aa).

The residue at position 1 (Gln-1) is a Pyrrolidone carboxylic acid. 3 cysteine pairs are disulfide-bonded: Cys-6–Cys-32, Cys-10–Cys-26, and Cys-14–Cys-31.

It localises to the secreted. This chain is Small basic protein 1, found in Anas platyrhynchos (Mallard).